The primary structure comprises 882 residues: Chondroitin sulfate synthase 3 (882 aa).

Topologically, residues 1 to 7 (MAVRSRR) are cytoplasmic. Residues 8 to 28 (PWMSVALGLVLGFTAASWLIA) traverse the membrane as a helical; Signal-anchor for type II membrane protein segment. Topologically, residues 29–882 (PRVAELSERK…LGVRYNRTLS (854 aa)) are lumenal. The interval 46-167 (SYYGRSAAGP…GDGGAAAPSA (122 aa)) is disordered. Composition is skewed to low complexity over residues 59–69 (AQQPLPQPQSR) and 120–131 (GATGLPGAPAAE). 3 N-linked (GlcNAc...) asparagine glycosylation sites follow: Asn-155, Asn-279, and Asn-710. A divalent metal cation-binding residues include Asp-720 and His-834. Residue Asn-878 is glycosylated (N-linked (GlcNAc...) asparagine).

The protein belongs to the chondroitin N-acetylgalactosaminyltransferase family. Co(2+) is required as a cofactor. Requires Mn(2+) as cofactor. Cd(2+) serves as cofactor. In terms of tissue distribution, detected at low levels in brain, cerebral cortex, uterus and small intestine.

The protein localises to the golgi apparatus. The protein resides in the golgi stack membrane. The enzyme catalyses 3-O-(beta-D-GlcA-(1-&gt;3)-beta-D-GalNAc-(1-&gt;4)-beta-D-GlcA-(1-&gt;3)-beta-D-Gal-(1-&gt;3)-beta-D-Gal-(1-&gt;4)-beta-D-Xyl)-L-seryl-[protein] + UDP-N-acetyl-alpha-D-galactosamine = 3-O-(beta-D-GalNAc-(1-&gt;4)-beta-D-GlcA-(1-&gt;3)-beta-D-GalNAc-(1-&gt;4)-beta-D-GlcA-(1-&gt;3)-beta-D-Gal-(1-&gt;3)-beta-D-Gal-(1-&gt;4)-beta-D-Xyl)-L-seryl-[protein] + UDP + H(+). The catalysed reaction is 3-O-{beta-D-GlcA-(1-&gt;3)-[beta-D-GalNAc-(1-&gt;4)-beta-D-GlcA-(1-&gt;3)](n)-beta-D-GalNAc-(1-&gt;4)-beta-D-GlcA-(1-&gt;3)-beta-D-Gal-(1-&gt;3)-beta-D-Gal-(1-&gt;4)-beta-D-Xyl}-L-seryl-[protein] + UDP-N-acetyl-alpha-D-galactosamine = 3-O-{[beta-D-GalNAc-(1-&gt;4)-beta-D-GlcA-(1-&gt;3)](n+1)-beta-D-GalNAc-(1-&gt;4)-beta-D-GlcA-(1-&gt;3)-beta-D-Gal-(1-&gt;3)-beta-D-Gal-(1-&gt;4)-beta-D-Xyl}-L-seryl-[protein] + UDP + H(+). It carries out the reaction 3-O-(beta-D-GalNAc-(1-&gt;4)-beta-D-GlcA-(1-&gt;3)-beta-D-Gal-(1-&gt;3)-beta-D-Gal-(1-&gt;4)-beta-D-Xyl)-L-seryl-[protein] + UDP-alpha-D-glucuronate = 3-O-(beta-D-GlcA-(1-&gt;3)-beta-D-GalNAc-(1-&gt;4)-beta-D-GlcA-(1-&gt;3)-beta-D-Gal-(1-&gt;3)-beta-D-Gal-(1-&gt;4)-beta-D-Xyl)-L-seryl-[protein] + UDP + H(+). It catalyses the reaction 3-O-{[beta-D-GalNAc-(1-&gt;4)-beta-D-GlcA-(1-&gt;3)](n)-beta-D-GalNAc-(1-&gt;4)-beta-D-GlcA-(1-&gt;3)-beta-D-Gal-(1-&gt;3)-beta-D-Gal-(1-&gt;4)-beta-D-Xyl}-L-seryl-[protein] + UDP-alpha-D-glucuronate = 3-O-{beta-D-GlcA-(1-&gt;3)-[beta-D-GalNAc-(1-&gt;4)-beta-D-GlcA-(1-&gt;3)](n)-beta-D-GalNAc-(1-&gt;4)-beta-D-GlcA-(1-&gt;3)-beta-D-Gal-(1-&gt;3)-beta-D-Gal-(1-&gt;4)-beta-D-Xyl}-L-seryl-[protein] + UDP + H(+). Its function is as follows. Has both beta-1,3-glucuronic acid and beta-1,4-N-acetylgalactosamine transferase activity. Transfers glucuronic acid (GlcUA) from UDP-GlcUA and N-acetylgalactosamine (GalNAc) from UDP-GalNAc to the non-reducing end of the elongating chondroitin polymer. Specific activity is much reduced compared to CHSY1. The polypeptide is Chondroitin sulfate synthase 3 (CHSY3) (Homo sapiens (Human)).